We begin with the raw amino-acid sequence, 572 residues long: Urease subunit alpha (572 aa).

A Urease domain is found at 133 to 572 (GGIDLHVHYI…TSLSQRYFLF (440 aa)). Positions 138, 140, and 221 each coordinate Ni(2+). Lys-221 carries the N6-carboxylysine modification. His-223 lines the substrate pocket. Ni(2+) is bound by residues His-250 and His-276. The Proton donor role is filled by His-324. Asp-364 contributes to the Ni(2+) binding site.

The protein belongs to the metallo-dependent hydrolases superfamily. Urease alpha subunit family. Heterotrimer of UreA (gamma), UreB (beta) and UreC (alpha) subunits. Three heterotrimers associate to form the active enzyme. Ni cation serves as cofactor. Carboxylation allows a single lysine to coordinate two nickel ions.

Its subcellular location is the cytoplasm. It catalyses the reaction urea + 2 H2O + H(+) = hydrogencarbonate + 2 NH4(+). It participates in nitrogen metabolism; urea degradation; CO(2) and NH(3) from urea (urease route): step 1/1. Ureolysis may allow urea to be employed as a nitrogen source for growth and produces ammonia which may protect from killing at low pH. This is Urease subunit alpha from Streptococcus salivarius (strain 57.I).